Here is a 265-residue protein sequence, read N- to C-terminus: Tryptophan synthase alpha chain (265 aa).

Catalysis depends on proton acceptor residues E49 and D60.

The protein belongs to the TrpA family. As to quaternary structure, tetramer of two alpha and two beta chains.

The enzyme catalyses (1S,2R)-1-C-(indol-3-yl)glycerol 3-phosphate + L-serine = D-glyceraldehyde 3-phosphate + L-tryptophan + H2O. It functions in the pathway amino-acid biosynthesis; L-tryptophan biosynthesis; L-tryptophan from chorismate: step 5/5. Functionally, the alpha subunit is responsible for the aldol cleavage of indoleglycerol phosphate to indole and glyceraldehyde 3-phosphate. This is Tryptophan synthase alpha chain from Cupriavidus metallidurans (strain ATCC 43123 / DSM 2839 / NBRC 102507 / CH34) (Ralstonia metallidurans).